Consider the following 616-residue polypeptide: Chaperone protein HscA (616 aa).

The protein belongs to the heat shock protein 70 family.

In terms of biological role, chaperone involved in the maturation of iron-sulfur cluster-containing proteins. Has a low intrinsic ATPase activity which is markedly stimulated by HscB. Involved in the maturation of IscU. The sequence is that of Chaperone protein HscA from Salmonella paratyphi B (strain ATCC BAA-1250 / SPB7).